The following is a 470-amino-acid chain: Box C/D snoRNA protein 1 (470 aa).

The segment at methionine 1–glutamate 70 is disordered. Position 25 is a phosphoserine (serine 25). Over residues glutamate 41 to leucine 51 the composition is skewed to gly residues. Glycyl lysine isopeptide (Lys-Gly) (interchain with G-Cter in SUMO2) cross-links involve residues lysine 79, lysine 108, lysine 118, lysine 138, lysine 143, lysine 153, lysine 162, lysine 173, lysine 183, and lysine 200. Cysteine 220, cysteine 223, cysteine 232, cysteine 235, cysteine 240, cysteine 244, histidine 248, and cysteine 254 together coordinate Zn(2+). The segment at cysteine 220–cysteine 254 adopts an HIT-type zinc-finger fold. A Glycyl lysine isopeptide (Lys-Gly) (interchain with G-Cter in SUMO2) cross-link involves residue lysine 459.

This sequence belongs to the BCD1 family. Interacts with FBL, SNU13, NOP58, NUFIP1, RUVBL1, RUVBL2 and TAF9. Interacts (via HIT-type zinc finger) with the RUVBL1/RUVBL2 complex in the presence of ADP.

In terms of biological role, required for box C/D snoRNAs accumulation involved in snoRNA processing, snoRNA transport to the nucleolus and ribosome biogenesis. This chain is Box C/D snoRNA protein 1 (ZNHIT6), found in Homo sapiens (Human).